The sequence spans 537 residues: MPAPTQLFFPLIRNCELSRIYGTACYCHHKHLCCSSSYIPQSRLRYTPHPAYATFCRPKENWWHYTQGRRYASTPQKFYLTPPQVNSILKANEYSFKVPEFDGKNVSSILGFDSNQLPANAPIEDRRSAATCLQTRGMLLGVFDGHAGCACSQAVSERLFYYIAVSLLPHETLLEIENAVESGRALLPILQWHKHPNDYFSKEASKLYFNSLRTYWQELIDLNTGESTDIDVKEALINAFKRLDNDISLEAQVGDPNSFLNYLVLRVAFSGATACVAHVDGVDLHVANTGDSRAMLGVQEEDGSWSALTLSNDHNAQNERELERLKLEHPKSEAKSVVKQDRLLGLLMPFRAFGDVKFKWSIDLQKRVIESGPDQLNDNEYTKFIPPNYHTPPYLTAEPEVTYHRLRPQDKFLVLATDGLWETMHRQDVVRIVGEYLTGMHHQQPIAVGGYKVTLGQMHGLLTERRTKMSSVFEDQNAATHLIRHAVGNNEFGTVDHERLSKMLSLPEELARMYRDDITIIVVQFNSHVVGAYQNQE.

Residues 1–71 constitute a mitochondrion transit peptide; the sequence is MPAPTQLFFP…WWHYTQGRRY (71 aa). Residues 109 to 525 form the PPM-type phosphatase domain; sequence ILGFDSNQLP…DDITIIVVQF (417 aa). Residues Asp-144 and Gly-145 each coordinate Mn(2+). Lys-202 carries the post-translational modification N6-acetyllysine. Mn(2+)-binding residues include Asp-418 and Asp-516.

Belongs to the PP2C family. Heterodimer of a catalytic (PDP1) and a regulatory (PDPR) subunit. Requires Mn(2+) as cofactor. Mg(2+) is required as a cofactor.

It localises to the mitochondrion. It carries out the reaction O-phospho-L-seryl-[pyruvate dehydrogenase E1 alpha subunit] + H2O = L-seryl-[pyruvate dehydrogenase E1 alpha subunit] + phosphate. Its activity is regulated as follows. Magnesium-dependent and calcium-stimulated. PDP1 activity strongly depends on its Ca(2+)-dependent binding to the lipoyl domain of E2 subunit of component of the pyruvate dehydrogenase complex. Functionally, mitochondrial enzyme that catalyzes the dephosphorylation and concomitant reactivation of the alpha subunit of the E1 component of the pyruvate dehydrogenase complex (PDC), thereby stimulating the conversion of pyruvate into acetyl-CoA. In Pongo abelii (Sumatran orangutan), this protein is [Pyruvate dehydrogenase [acetyl-transferring]]-phosphatase 1, mitochondrial (PDP1).